Consider the following 196-residue polypeptide: Thymidine kinase (196 aa).

ATP is bound by residues 9 to 16 (SAMNAGKS) and 87 to 90 (DECQ). The active-site Proton acceptor is the E88. Residues C145, C147, C182, and H185 each coordinate Zn(2+).

It belongs to the thymidine kinase family. In terms of assembly, homotetramer.

The protein localises to the cytoplasm. It carries out the reaction thymidine + ATP = dTMP + ADP + H(+). In Yersinia pestis, this protein is Thymidine kinase.